The primary structure comprises 180 residues: Large ribosomal subunit protein uL5 (180 aa).

This sequence belongs to the universal ribosomal protein uL5 family. In terms of assembly, part of the 50S ribosomal subunit; part of the 5S rRNA/L5/L18/L25 subcomplex. Contacts the 5S rRNA and the P site tRNA. Forms a bridge to the 30S subunit in the 70S ribosome.

Its function is as follows. This is one of the proteins that bind and probably mediate the attachment of the 5S RNA into the large ribosomal subunit, where it forms part of the central protuberance. In the 70S ribosome it contacts protein S13 of the 30S subunit (bridge B1b), connecting the 2 subunits; this bridge is implicated in subunit movement. Contacts the P site tRNA; the 5S rRNA and some of its associated proteins might help stabilize positioning of ribosome-bound tRNAs. The protein is Large ribosomal subunit protein uL5 of Limosilactobacillus reuteri (strain DSM 20016) (Lactobacillus reuteri).